The primary structure comprises 101 residues: Small ribosomal subunit protein uS14 (101 aa).

The protein belongs to the universal ribosomal protein uS14 family. As to quaternary structure, part of the 30S ribosomal subunit. Contacts proteins S3 and S10.

Its function is as follows. Binds 16S rRNA, required for the assembly of 30S particles and may also be responsible for determining the conformation of the 16S rRNA at the A site. The chain is Small ribosomal subunit protein uS14 from Hydrogenovibrio crunogenus (strain DSM 25203 / XCL-2) (Thiomicrospira crunogena).